Here is a 337-residue protein sequence, read N- to C-terminus: MDRNRASARLTVLLRHLGCRSAGTIIAHHTSGVGSLASFHPQQFQYTRENNVLSLEQRKFYEENGFLVIKNLVSDADIQRFRNEFERICRKEVKPLGLSVMRDVTITKSEYVPSEKVVSKVQDFQEDEELFRYCTLPEILKYVECFTGPNIMAMHTMLINKPPDSGKKTSRHPLHQDLHYFPFRPSNSIVCAWTAMEHIDRNNGCLVVLPGTHKGPLQPHDYPQWEGGVNIMFHGIQDYDKNNARVHLVMEKGDTVFFHPLLIHGSGRNKSQGFRKAISCHFADANCHYIDVEGTSQENIEKEVVDIVRKKYGFKDVTLKDVWTFRGRVVKGERINL.

The N-terminal 30 residues, 1–30 (MDRNRASARLTVLLRHLGCRSAGTIIAHHT), are a transit peptide targeting the peroxisome. 2 positions are modified to N6-succinyllysine: lysine 59 and lysine 108. 2-oxoglutarate is bound by residues lysine 120, methionine 157, 175–177 (HQD), and tryptophan 193. Positions 175 and 177 each coordinate Fe cation. Lysine 252 carries the post-translational modification N6-succinyllysine. Fe cation is bound at residue histidine 264. Positions 266 and 275 each coordinate 2-oxoglutarate.

Belongs to the PhyH family. In terms of assembly, interacts with FKBP52 and PHYHIP. Fe cation serves as cofactor. Requires L-ascorbate as cofactor. The cofactor is ATP. It depends on Mg(2+) as a cofactor.

The protein localises to the peroxisome. The enzyme catalyses phytanoyl-CoA + 2-oxoglutarate + O2 = 2-hydroxyphytanoyl-CoA + succinate + CO2. It catalyses the reaction 3-methylhexadecanoyl-CoA + 2-oxoglutarate + O2 = 2-hydroxy-3-methylhexadecanoyl-CoA + succinate + CO2. The catalysed reaction is hexadecanoyl-CoA + 2-oxoglutarate + O2 = 2-hydroxyhexadecanoyl-CoA + succinate + CO2. It carries out the reaction octanoyl-CoA + 2-oxoglutarate + O2 = 2-hydroxyoctanoyl-CoA + succinate + CO2. The enzyme catalyses decanoyl-CoA + 2-oxoglutarate + O2 = 2-hydroxydecanoyl-CoA + succinate + CO2. It catalyses the reaction 3-methylbutanoyl-CoA + 2-oxoglutarate + O2 = 2-hydroxy-3-methylbutanoyl-CoA + succinate + CO2. The catalysed reaction is heptadecanoyl-CoA + 2-oxoglutarate + O2 = 2-hydroxyheptadecanoyl-CoA + succinate + CO2. It carries out the reaction eicosanoyl-CoA + 2-oxoglutarate + O2 = 2-hydroxyeicosanoyl-CoA + succinate + CO2. The enzyme catalyses octadecanoyl-CoA + 2-oxoglutarate + O2 = 2-hydroxyoctadecanoyl-CoA + succinate + CO2. It catalyses the reaction dodecanoyl-CoA + 2-oxoglutarate + O2 = 2-hydroxydodecanoyl-CoA + succinate + CO2. The catalysed reaction is tetradecanoyl-CoA + 2-oxoglutarate + O2 = 2-hydroxytetradecanoyl-CoA + succinate + CO2. It carries out the reaction hexanoyl-CoA + 2-oxoglutarate + O2 = 2-hydroxyhexanoyl-CoA + succinate + CO2. The enzyme catalyses butanoyl-CoA + 2-oxoglutarate + O2 = 2-hydroxybutanoyl-CoA + succinate + CO2. It catalyses the reaction 3-methylnonanoyl-CoA + 2-oxoglutarate + O2 = 2-hydroxy-3-methylnonanoyl-CoA + succinate + CO2. The catalysed reaction is 3-methylundecanoyl-CoA + 2-oxoglutarate + O2 = 2-hydroxy-3-methylundecanoyl-CoA + succinate + CO2. It carries out the reaction 3-methyldodecanoyl-CoA + 2-oxoglutarate + O2 = 2-hydroxy-3-methyldodecanoyl-CoA + succinate + CO2. Its pathway is lipid metabolism; fatty acid metabolism. In terms of biological role, catalyzes the 2-hydroxylation of not only racemic phytanoyl-CoA and the isomers of 3-methylhexadecanoyl-CoA, but also a variety of other mono- branched 3-methylacyl-CoA esters (with a chain length of at least seven carbon atoms) and straight-chain acyl-CoA esters (with a chain length longer than four carbon atoms). Does not hydroxylate long and very long straight chain acyl-CoAs or 2-methyl-and 4-methyl-branched acyl-CoAs. This chain is Phytanoyl-CoA dioxygenase, peroxisomal (PHYH), found in Bos taurus (Bovine).